Consider the following 306-residue polypeptide: MAEKVAVLLGGTSAEREVSLLSGQAVLAGLREAGIDAHPVDTKDFPVTQLKEAGFEKVFIALHGRGGEDGTLQGVLEFLQLPYTGSGVMASALSMDKLRTKQVWQGIGLTVSPYVSINSQQVERLTDSQLQEYVADLGLPLIVKPSLEGSSVGMTKVNEISELRGALEAAFRYDVDLLVEKWLHGPEYTVAILGDTALPSIRIQPAAVFYDYDAKYWSEETQYFCPSGLSDEKEQQLAELALKAYQSVGCSGWGRVDVMMDTDGDFYLLEVNTSPGMTSHSLVPMAARQAGLSFSQLVVKILELAD.

The region spanning 101–303 is the ATP-grasp domain; the sequence is KQVWQGIGLT…FSQLVVKILE (203 aa). 134-189 lines the ATP pocket; the sequence is VADLGLPLIVKPSLEGSSVGMTKVNEISELRGALEAAFRYDVDLLVEKWLHGPEYT. Residues Asp257, Glu270, and Asn272 each contribute to the Mg(2+) site.

Belongs to the D-alanine--D-alanine ligase family. Requires Mg(2+) as cofactor. The cofactor is Mn(2+).

The protein localises to the cytoplasm. It carries out the reaction 2 D-alanine + ATP = D-alanyl-D-alanine + ADP + phosphate + H(+). Its pathway is cell wall biogenesis; peptidoglycan biosynthesis. In terms of biological role, cell wall formation. The chain is D-alanine--D-alanine ligase from Photorhabdus laumondii subsp. laumondii (strain DSM 15139 / CIP 105565 / TT01) (Photorhabdus luminescens subsp. laumondii).